Consider the following 28-residue polypeptide: Cyclotide vodo I3 (28 aa).

3 cysteine pairs are disulfide-bonded: cysteine 4-cysteine 18, cysteine 8-cysteine 20, and cysteine 13-cysteine 25.

Post-translationally, this is a cyclic peptide. Contains 3 disulfide bonds.

In terms of biological role, probably participates in a plant defense mechanism. The chain is Cyclotide vodo I3 from Viola odorata (Sweet violet).